The primary structure comprises 173 residues: Chromophore lyase CpcS/CpeS 3 (173 aa).

It belongs to the CpcS/CpeS biliprotein lyase family.

Covalently attaches a chromophore to Cys residue(s) of phycobiliproteins. The chain is Chromophore lyase CpcS/CpeS 3 from Trichodesmium erythraeum (strain IMS101).